We begin with the raw amino-acid sequence, 377 residues long: Homoserine O-succinyltransferase (377 aa).

The AB hydrolase-1 domain occupies 50-358 (NAILVCHALS…PSTYGHDSFL (309 aa)). The active-site Nucleophile is S156. Position 226 (R226) interacts with substrate. Residues D321 and H354 contribute to the active site. Residue D355 participates in substrate binding.

The protein belongs to the AB hydrolase superfamily. MetX family. In terms of assembly, homodimer.

Its subcellular location is the cytoplasm. The enzyme catalyses L-homoserine + succinyl-CoA = O-succinyl-L-homoserine + CoA. Its pathway is amino-acid biosynthesis; L-methionine biosynthesis via de novo pathway; O-succinyl-L-homoserine from L-homoserine: step 1/1. In terms of biological role, transfers a succinyl group from succinyl-CoA to L-homoserine, forming succinyl-L-homoserine. The sequence is that of Homoserine O-succinyltransferase from Nitrosomonas eutropha (strain DSM 101675 / C91 / Nm57).